Consider the following 277-residue polypeptide: Large ribosomal subunit protein uL2 (277 aa).

Positions serine 223–lysine 261 are disordered.

It belongs to the universal ribosomal protein uL2 family. As to quaternary structure, part of the 50S ribosomal subunit. Forms a bridge to the 30S subunit in the 70S ribosome.

In terms of biological role, one of the primary rRNA binding proteins. Required for association of the 30S and 50S subunits to form the 70S ribosome, for tRNA binding and peptide bond formation. It has been suggested to have peptidyltransferase activity; this is somewhat controversial. Makes several contacts with the 16S rRNA in the 70S ribosome. This is Large ribosomal subunit protein uL2 from Clostridium botulinum (strain Alaska E43 / Type E3).